The chain runs to 442 residues: tRNA modification GTPase MnmE (442 aa).

The (6S)-5-formyl-5,6,7,8-tetrahydrofolate site is built by arginine 27, glutamate 84, and lysine 124. The region spanning 221 to 366 (GLHVVIVGAP…LLTNLQNFAE (146 aa)) is the TrmE-type G domain. Residues 231–236 (NAGKSS), 250–256 (SEEAGTT), and 275–278 (DTAG) each bind GTP. Mg(2+) is bound by residues serine 235 and threonine 256. Residue lysine 442 coordinates (6S)-5-formyl-5,6,7,8-tetrahydrofolate.

This sequence belongs to the TRAFAC class TrmE-Era-EngA-EngB-Septin-like GTPase superfamily. TrmE GTPase family. Homodimer. Heterotetramer of two MnmE and two MnmG subunits. It depends on K(+) as a cofactor.

The protein resides in the cytoplasm. Its function is as follows. Exhibits a very high intrinsic GTPase hydrolysis rate. Involved in the addition of a carboxymethylaminomethyl (cmnm) group at the wobble position (U34) of certain tRNAs, forming tRNA-cmnm(5)s(2)U34. The protein is tRNA modification GTPase MnmE of Brucella anthropi (strain ATCC 49188 / DSM 6882 / CCUG 24695 / JCM 21032 / LMG 3331 / NBRC 15819 / NCTC 12168 / Alc 37) (Ochrobactrum anthropi).